We begin with the raw amino-acid sequence, 337 residues long: Heat-inducible transcription repressor HrcA (337 aa).

Belongs to the HrcA family.

Negative regulator of class I heat shock genes (grpE-dnaK-dnaJ and groELS operons). Prevents heat-shock induction of these operons. This chain is Heat-inducible transcription repressor HrcA, found in Nocardioides sp. (strain ATCC BAA-499 / JS614).